Consider the following 239-residue polypeptide: Phosphoribosylaminoimidazole-succinocarboxamide synthase (239 aa).

It belongs to the SAICAR synthetase family.

The catalysed reaction is 5-amino-1-(5-phospho-D-ribosyl)imidazole-4-carboxylate + L-aspartate + ATP = (2S)-2-[5-amino-1-(5-phospho-beta-D-ribosyl)imidazole-4-carboxamido]succinate + ADP + phosphate + 2 H(+). It participates in purine metabolism; IMP biosynthesis via de novo pathway; 5-amino-1-(5-phospho-D-ribosyl)imidazole-4-carboxamide from 5-amino-1-(5-phospho-D-ribosyl)imidazole-4-carboxylate: step 1/2. In Campylobacter hominis (strain ATCC BAA-381 / DSM 21671 / CCUG 45161 / LMG 19568 / NCTC 13146 / CH001A), this protein is Phosphoribosylaminoimidazole-succinocarboxamide synthase.